A 929-amino-acid polypeptide reads, in one-letter code: Valine--tRNA ligase (929 aa).

The 'HIGH' region motif lies at 59–69; it reads PNVTGSLHMGH. Positions 557 to 561 match the 'KMSKS' region motif; it reads KMSKS. Residue K560 coordinates ATP. A coiled-coil region spans residues 862-929; the sequence is LVDLDALRGR…LARQRLSDLG (68 aa).

It belongs to the class-I aminoacyl-tRNA synthetase family. ValS type 1 subfamily. As to quaternary structure, monomer.

It localises to the cytoplasm. The enzyme catalyses tRNA(Val) + L-valine + ATP = L-valyl-tRNA(Val) + AMP + diphosphate. Functionally, catalyzes the attachment of valine to tRNA(Val). As ValRS can inadvertently accommodate and process structurally similar amino acids such as threonine, to avoid such errors, it has a 'posttransfer' editing activity that hydrolyzes mischarged Thr-tRNA(Val) in a tRNA-dependent manner. The chain is Valine--tRNA ligase from Prochlorococcus marinus (strain MIT 9313).